Here is a 110-residue protein sequence, read N- to C-terminus: Host transcription reprogramming factor 2 (110 aa).

The first 18 residues, methionine 1–alanine 18, serve as a signal peptide directing secretion. The C2H2-type zinc finger occupies isoleucine 68–histidine 96. Residues lysine 88–threonine 110 form a disordered region. A compositionally biased stretch (basic and acidic residues) spans proline 100–threonine 110.

Its subcellular location is the secreted. The protein resides in the host nucleus. Secreted effector that translocates into the nuclei of host cells to reprogram the expression of immunity-associated genes by binding to effector binding elements (EBEs) in rice. Binds the 5'-CCACCTCC-3' EBE of promoters from targeted rice genes and probably recruits a yet to be determined host repressor. Causes ambivalent immunity with increased susceptibility to the hemibiotrophic pathogens Magnaporthe oryzae and Xanthomonas oryzae pv. oryzae, but enhances resistance to Cochliobolus miyabeanus, a necrotrophic pathogen. This is Host transcription reprogramming factor 2 from Pyricularia oryzae (strain 70-15 / ATCC MYA-4617 / FGSC 8958) (Rice blast fungus).